The primary structure comprises 86 residues: Apolipoprotein C-I (86 aa).

An N-terminal signal peptide occupies residues 1-26 (MRLFLSLPVLVVALLTILEGPGPAQG).

This sequence belongs to the apolipoprotein C1 family.

It localises to the secreted. Inhibitor of lipoprotein binding to the low density lipoprotein (LDL) receptor, LDL receptor-related protein, and very low density lipoprotein (VLDL) receptor. Associates with high density lipoproteins (HDL) and the triacylglycerol-rich lipoproteins in the plasma and makes up about 10% of the protein of the VLDL and 2% of that of HDL. Appears to interfere directly with fatty acid uptake and is also the major plasma inhibitor of cholesteryl ester transfer protein (CETP). Binds free fatty acids and reduces their intracellular esterification. Modulates the interaction of APOE with beta-migrating VLDL and inhibits binding of beta-VLDL to the LDL receptor-related protein. This is Apolipoprotein C-I (APOC1) from Plecturocebus moloch (Dusky titi monkey).